Consider the following 388-residue polypeptide: Succinate--CoA ligase [ADP-forming] subunit beta (388 aa).

In terms of domain architecture, ATP-grasp spans 9 to 245; sequence KELLAGYGLP…KSQENERELK (237 aa). Residues Lys-46, 53–55, Glu-100, Tyr-103, and Glu-108 each bind ATP; that span reads GRG. Mg(2+)-binding residues include Asn-200 and Asp-214. Substrate is bound by residues Asn-265 and 322–324; that span reads GIV.

The protein belongs to the succinate/malate CoA ligase beta subunit family. As to quaternary structure, heterotetramer of two alpha and two beta subunits. The cofactor is Mg(2+).

It catalyses the reaction succinate + ATP + CoA = succinyl-CoA + ADP + phosphate. The catalysed reaction is GTP + succinate + CoA = succinyl-CoA + GDP + phosphate. Its pathway is carbohydrate metabolism; tricarboxylic acid cycle; succinate from succinyl-CoA (ligase route): step 1/1. Succinyl-CoA synthetase functions in the citric acid cycle (TCA), coupling the hydrolysis of succinyl-CoA to the synthesis of either ATP or GTP and thus represents the only step of substrate-level phosphorylation in the TCA. The beta subunit provides nucleotide specificity of the enzyme and binds the substrate succinate, while the binding sites for coenzyme A and phosphate are found in the alpha subunit. The polypeptide is Succinate--CoA ligase [ADP-forming] subunit beta (Neisseria meningitidis serogroup C (strain 053442)).